Consider the following 119-residue polypeptide: DNA-binding protein inhibitor ID-3 (119 aa).

In terms of domain architecture, bHLH spans 28–80 (RGKSPSAEEPLSLLDDMNHCYSRLRELVPGVPRGTQLSQVEILQRVIDYILDL).

Homodimer, and heterodimer with other HLH proteins. Interacts with COPS5 and COPS7A. Interacts with IFI204. Interacts with GATA4 and NKX2-5. Interacts with ANKRD2; both proteins cooperate in myoblast differentiation. Interacts with CLOCK and BMAL1. Post-translationally, phosphorylated in vitro by CDC2 and PKC.

The protein localises to the nucleus. In terms of biological role, transcriptional regulator (lacking a basic DNA binding domain) which negatively regulates the basic helix-loop-helix (bHLH) transcription factors by forming heterodimers and inhibiting their DNA binding and transcriptional activity. Implicated in regulating a variety of cellular processes, including cellular growth, senescence, differentiation, apoptosis, angiogenesis, and neoplastic transformation. Involved in myogenesis by inhibiting skeletal muscle and cardiac myocyte differentiation and promoting muscle precursor cells proliferation. Inhibits the binding of E2A-containing protein complexes to muscle creatine kinase E-box enhancer. Regulates the circadian clock by repressing the transcriptional activator activity of the CLOCK-BMAL1 heterodimer. The protein is DNA-binding protein inhibitor ID-3 (Id3) of Rattus norvegicus (Rat).